Consider the following 174-residue polypeptide: Adenylate kinase (174 aa).

An NMP region spans residues Ser-12–Val-41. AMP is bound by residues Thr-13, Arg-18, Gly-39–Val-41, Gly-67–Arg-70, and Gln-74. Residues Gly-104 to Asp-141 are LID. Residues Arg-105 and Thr-114 to Tyr-115 each bind ATP. AMP is bound by residues Arg-138 and Arg-149.

This sequence belongs to the adenylate kinase family. In terms of assembly, monomer.

The protein localises to the cytoplasm. It catalyses the reaction AMP + ATP = 2 ADP. It functions in the pathway purine metabolism; AMP biosynthesis via salvage pathway; AMP from ADP: step 1/1. Catalyzes the reversible transfer of the terminal phosphate group between ATP and AMP. Plays an important role in cellular energy homeostasis and in adenine nucleotide metabolism. This Neisseria animalis protein is Adenylate kinase.